The chain runs to 71 residues: MPQAEDKRQAAREVIDILHEISTLLNTNLDRTELSLCVSLIENGVNPDALAAVIADLRKETAPTSRHVLPE.

The protein belongs to the MOZART1 family. In terms of assembly, part of the gamma-tubulin complex.

Its subcellular location is the cytoplasm. The protein resides in the cytoskeleton. The protein localises to the microtubule organizing center. It is found in the spindle pole body. Required for gamma-tubulin complex recruitment to the microtubule organizing center (MTOC). The polypeptide is Mitotic-spindle organizing protein 1 (Aspergillus clavatus (strain ATCC 1007 / CBS 513.65 / DSM 816 / NCTC 3887 / NRRL 1 / QM 1276 / 107)).